A 436-amino-acid polypeptide reads, in one-letter code: MRIVVLGAGVVGVTSAYELARAGHEVTVVDRQPAAALETSFANAGEISPGYASPWAAPGIPAKALRWMFMKHAPLVIRPRLDAAQVRFLLAILRNCTPAAYAQNKGRMVRLAEYSRDCLTDLRATTGLAFDERQQGTLQLFRSQKQLDAAARDIEVLRAGGVPFELLDADGCLAAEPGLRAARDRIAGGLRLTGDETGDCFKFTQGLAGLAEEGGVRFRYGTGVERLRVEGGRVTGVETTKGTFLADAVVVALGSYSPALVAPLGLRLPVYPVKGYSITVPIVDAERAPVSTVMDETYKIAITRLGTRIRVGGMAEVAGFSATLPPARRETLAMSVNDLFGGAGDLSRASFWTGLRPMTPDGTPVVGRTPVAGLWLNTGHGTLGWTMAAGSARVLSDLIDGRAPEIESADLGIERYVAPDRRARPAVRLNPARQAG.

FAD is bound at residue 3-17 (IVVLGAGVVGVTSAY).

It belongs to the DadA oxidoreductase family. FAD serves as cofactor.

The catalysed reaction is a D-alpha-amino acid + A + H2O = a 2-oxocarboxylate + AH2 + NH4(+). Its pathway is amino-acid degradation; D-alanine degradation; NH(3) and pyruvate from D-alanine: step 1/1. In terms of biological role, oxidative deamination of D-amino acids. This chain is D-amino acid dehydrogenase, found in Cereibacter sphaeroides (strain ATCC 17029 / ATH 2.4.9) (Rhodobacter sphaeroides).